The chain runs to 304 residues: m7GpppX diphosphatase (304 aa).

Substrate contacts are provided by residues E152, K174, and H235 to H246. A Histidine triad motif motif is present at residues H242–H246. The active-site Nucleophile is H244.

This sequence belongs to the HIT family.

Its subcellular location is the cytoplasm. The protein localises to the nucleus. It carries out the reaction a 5'-end (N(7)-methyl 5'-triphosphoguanosine)-ribonucleoside in mRNA + H2O = N(7)-methyl-GMP + a 5'-end diphospho-ribonucleoside in mRNA + 2 H(+). In terms of biological role, decapping scavenger enzyme that catalyzes the cleavage of a residual cap structure following the degradation of mRNAs by the 3'-&gt;5' exosome-mediated mRNA decay pathway. Hydrolyzes cap analog structures like 7-methylguanosine nucleoside triphosphate (m7GpppG) with up to 10 nucleotide substrates (small capped oligoribonucleotides) and specifically releases 5'-phosphorylated RNA fragments and 7-methylguanosine monophosphate (m7GMP). Has no activity towards mRNA molecules longer than 25 nucleotides. May also play a role in the 5'-&gt;3 mRNA decay pathway; m7GDP, the downstream product released by the 5'-&gt;3' mRNA mediated decapping activity, may be also converted by DCS1 to m7GMP. Inhibits mRNA translation. Binds to the m7GpppG cap analog. The protein is m7GpppX diphosphatase (nhm1) of Schizosaccharomyces pombe (strain 972 / ATCC 24843) (Fission yeast).